Here is a 355-residue protein sequence, read N- to C-terminus: Poly(3-hydroxyalkanoate) polymerase subunit PhaC (355 aa).

In terms of domain architecture, AB hydrolase-1 spans 69 to 334 (PLLIVYALVN…LAFPGGHIGI (266 aa)). C149 is an active-site residue.

The protein belongs to the PHA/PHB synthase family. Type III PhaC subfamily. In terms of assembly, a large complex of PhaC and PhaE; the ratio of the subunits has been estimated to be from 1:1 to 4:1, with more PhaE than PhaC.

Its subcellular location is the cytoplasm. It carries out the reaction (3R)-3-hydroxybutanoyl-CoA + [(3R)-hydroxybutanoate](n) = [(3R)-hydroxybutanoate](n+1) + CoA. It participates in biopolymer metabolism; poly-(R)-3-hydroxybutanoate biosynthesis. Its function is as follows. Polymerizes D(-)-3-hydroxybutyryl-CoA to create polyhydroxybutyrate (PHB) which consists of thousands of hydroxybutyrate molecules linked end to end. This subunit has catalytic activity that is enhanced 100-fold by PhaE, the non-catalytic subunit. In Allochromatium vinosum (strain ATCC 17899 / DSM 180 / NBRC 103801 / NCIMB 10441 / D) (Chromatium vinosum), this protein is Poly(3-hydroxyalkanoate) polymerase subunit PhaC.